Reading from the N-terminus, the 466-residue chain is Communesin N16 acyltransferase cnsK (466 aa).

The protein belongs to the fumigaclavine B O-acetyltransferase family.

Its pathway is alkaloid biosynthesis. Communesin N16 acyltransferase; part of the gene cluster that mediates the biosynthesis of communesins, a prominent class of indole alkaloids with great potential as pharmaceuticals. Communesins are biosynthesized by the coupling of tryptamine and aurantioclavine, two building blocks derived from L-tryptophan. The L-tryptophan decarboxylase cnsB converts L-tryptophan to tryptamine, whereas the tryptophan dimethylallyltransferase cnsF converts L-tryptophan to 4-dimethylallyl tryptophan which is further transformed to aurantioclavine by the aurantioclavine synthase cnsA, probably aided by the catalase cnsD. The cytochrome P450 monooxygenase cnsC catalyzes the heterodimeric coupling between the two different indole moieties, tryptamine and aurantioclavine, to construct vicinal quaternary stereocenters and yield the heptacyclic communesin scaffold. The O-methyltransferase cnsE then methylates the communesin scaffold to produce communesin K, the simplest characterized communesin that contains the heptacyclic core. The dioxygenase cnsJ converts communesin K into communesin I. Acylation to introduce the hexadienyl group at position N16 of communesin I by the acyltransferase cnsK leads to the production of communesin B. The hexadienyl group is produced by the highly reducing polyketide synthase cnsI, before being hydrolytically removed from cnsI by the serine hydrolase cnsH, converted into hexadienyl-CoA by the CoA ligase cnsG, and then transferred to communesin I by cnsK. Surprisingly, cnsK may also be a promiscuous acyltransferase that can tolerate a range of acyl groups, including acetyl-, propionyl-, and butyryl-CoA, which lead to communesins A, G and H respectively. The roles of the alpha-ketoglutarate-dependent dioxygenases cnsM and cnsP have still to be determined. The polypeptide is Communesin N16 acyltransferase cnsK (Penicillium expansum (Blue mold rot fungus)).